We begin with the raw amino-acid sequence, 276 residues long: Glutamate racemase (276 aa).

Substrate-binding positions include 10–11 (DS) and 42–43 (YG). The active-site Proton donor/acceptor is cysteine 74. 75–76 (NT) contacts substrate. Residue cysteine 185 is the Proton donor/acceptor of the active site. 186–187 (TH) provides a ligand contact to substrate.

The protein belongs to the aspartate/glutamate racemases family.

It catalyses the reaction L-glutamate = D-glutamate. It functions in the pathway cell wall biogenesis; peptidoglycan biosynthesis. In terms of biological role, provides the (R)-glutamate required for cell wall biosynthesis. The sequence is that of Glutamate racemase from Levilactobacillus brevis (strain ATCC 367 / BCRC 12310 / CIP 105137 / JCM 1170 / LMG 11437 / NCIMB 947 / NCTC 947) (Lactobacillus brevis).